Here is a 591-residue protein sequence, read N- to C-terminus: uncharacterized protein (591 aa).

The next 4 membrane-spanning stretches (helical) occupy residues 389–409 (VYLG…SALI), 411–431 (GGSP…GGIL), 538–558 (GILP…FALS), and 571–591 (PIIS…FNLL).

Its subcellular location is the membrane. This is an uncharacterized protein from Mycoplasma (Bacteriophage L2).